The primary structure comprises 65 residues: Large ribosomal subunit protein uL29 (65 aa).

It belongs to the universal ribosomal protein uL29 family.

The chain is Large ribosomal subunit protein uL29 from Syntrophus aciditrophicus (strain SB).